We begin with the raw amino-acid sequence, 110 residues long: Nucleoid-associated protein YpAngola_A2890 (110 aa).

Positions 90-110 (KEKMASVSNGMQLPPGFKMPF) are disordered.

It belongs to the YbaB/EbfC family. Homodimer.

Its subcellular location is the cytoplasm. The protein resides in the nucleoid. Its function is as follows. Binds to DNA and alters its conformation. May be involved in regulation of gene expression, nucleoid organization and DNA protection. The polypeptide is Nucleoid-associated protein YpAngola_A2890 (Yersinia pestis bv. Antiqua (strain Angola)).